Consider the following 519-residue polypeptide: MARRALKLASLAAAASGIYLYGNKFMDPNDFGVVRVGRAIATTAVITYDYLTSLRNVPYGSEEYDFLKSQVHLRSAERLRELCCANRGTFIKVGQHLGALDYLLPEEYTRTLKVLHSQAPQSTRQEIEQVIREDLGKEIKELFVSFEDTPLGAASLAQVHKAVLQDGRTVAVKIQHPKVQAQSSKDIFLMEVLLLVVKQIFPDFEFMWLVEEAKKNLPLELDFLNEGRNAEKVAQMLKNFEFLKVPRIYWELSTRRVLLMEFMEGGQVNDKAYMEKNGIDVNEISRNLGKLYSEMIFVNGFVHCDPHPGNVLVKKCPDSGKAYIILLDHGLYQVLSESFRMDYCRLWLALIKADMKRVQKYSRRLGAGDLYPLFACMLTARSWESVNRGIDQSPVSASEDVEIRSNAAAYLPQITQLLNNVPRQMLLLLKTNDLLRGIESALHTRASASSFLNMSRCCIRAVSTYQRSKSHSLYRRVHISLTEALSLWQINLYELFLWLKGSRLGSWVIAFLSRMHHST.

The Protein kinase domain occupies 145–481; it reads SFEDTPLGAA…SLYRRVHISL (337 aa). Residues 151-159 and Lys-173 each bind ATP; that span reads LGAASLAQV. Catalysis depends on Asp-305, which acts as the Proton acceptor.

Belongs to the protein kinase superfamily. ADCK protein kinase family.

It localises to the mitochondrion. In terms of biological role, appears to be essential for maintaining mitochondrial cristae formation and mitochondrial function by acting via YME1L1 in a kinase-independent manner to regulate essential mitochondrial structural proteins OPA1 and IMMT. The action of this enzyme is not yet clear. It is not known if it has protein kinase activity and what type of substrate it would phosphorylate (Ser, Thr or Tyr). This chain is AarF domain-containing protein kinase 1 (ADCK1), found in Gallus gallus (Chicken).